A 5162-amino-acid polypeptide reads, in one-letter code: Linear gramicidin synthase subunit B (5162 aa).

Carrier domains lie at 963–1038 (APRN…QALR), 2027–2101 (EPQS…VVLE), 3541–3616 (APRN…GAIG), and 4601–4675 (AATS…GQST). O-(pantetheine 4'-phosphoryl)serine occurs at positions 998, 2062, 3576, and 4636.

This sequence belongs to the ATP-dependent AMP-binding enzyme family. In terms of assembly, large multienzyme complex composed of 4 subunits; LgrA, LgrB, LgrC and LgrD. Requires pantetheine 4'-phosphate as cofactor.

Functionally, activates the 3rd to 6th amino acids (Ala, D-Leu, Ala and D-Val) in linear gramicidin and catalyzes the formation of the peptide bond between them. This enzyme is also responsible for the epimerization of the 4th (D-Leu) and the 6th (D-Val) amino acids. The chain is Linear gramicidin synthase subunit B (lgrB) from Brevibacillus parabrevis.